Reading from the N-terminus, the 125-residue chain is MTIPEDLRYTKDHEWMKLLDDGTALVGITDFAQSELGDIVFVELKADGTTLKTHESFGTVEAVKTVADLFAPVAGEIVASNPELASAEVVNQDPYNAWLIKMKVANPAEVEALLDAAAYRQLIGE.

A Lipoyl-binding domain is found at 23–103 (TALVGITDFA…PYNAWLIKMK (81 aa)). K64 bears the N6-lipoyllysine mark.

Belongs to the GcvH family. As to quaternary structure, the glycine cleavage system is composed of four proteins: P, T, L and H. (R)-lipoate serves as cofactor.

In terms of biological role, the glycine cleavage system catalyzes the degradation of glycine. The H protein shuttles the methylamine group of glycine from the P protein to the T protein. This chain is Glycine cleavage system H protein, found in Chlorobium chlorochromatii (strain CaD3).